The sequence spans 432 residues: Adenylosuccinate synthetase 1 (432 aa).

Residues 12–18 and 40–42 contribute to the GTP site; these read GDEGKGR and GHT. Asp13 serves as the catalytic Proton acceptor. Asp13 and Gly40 together coordinate Mg(2+). IMP is bound by residues 13–16, 38–41, Thr128, Arg142, Gln222, Thr237, and Arg301; these read DEGK and NAGH. The Proton donor role is filled by His41. Residue 297–303 participates in substrate binding; the sequence is TNTGRPR. GTP contacts are provided by residues Arg303, 329–331, and 411–413; these read KLD and STG.

Belongs to the adenylosuccinate synthetase family. In terms of assembly, homodimer. Mg(2+) is required as a cofactor.

It is found in the cytoplasm. The enzyme catalyses IMP + L-aspartate + GTP = N(6)-(1,2-dicarboxyethyl)-AMP + GDP + phosphate + 2 H(+). The protein operates within purine metabolism; AMP biosynthesis via de novo pathway; AMP from IMP: step 1/2. In terms of biological role, plays an important role in the de novo pathway of purine nucleotide biosynthesis. Catalyzes the first committed step in the biosynthesis of AMP from IMP. This is Adenylosuccinate synthetase 1 from Chromobacterium violaceum (strain ATCC 12472 / DSM 30191 / JCM 1249 / CCUG 213 / NBRC 12614 / NCIMB 9131 / NCTC 9757 / MK).